A 90-amino-acid polypeptide reads, in one-letter code: DNA-binding protein HTa (90 aa).

It belongs to the bacterial histone-like protein family. As to quaternary structure, homotetramer.

Functionally, histone-like DNA-binding protein which is capable of wrapping DNA to stabilize it, and thus to prevent its denaturation under extreme environmental conditions. This is DNA-binding protein HTa from Thermoplasma acidophilum (strain ATCC 25905 / DSM 1728 / JCM 9062 / NBRC 15155 / AMRC-C165).